Here is a 217-residue protein sequence, read N- to C-terminus: Deoxyribose-phosphate aldolase (217 aa).

Catalysis depends on Asp-89, which acts as the Proton donor/acceptor. The active-site Schiff-base intermediate with acetaldehyde is the Lys-151. Catalysis depends on Lys-180, which acts as the Proton donor/acceptor.

This sequence belongs to the DeoC/FbaB aldolase family. DeoC type 1 subfamily.

Its subcellular location is the cytoplasm. It catalyses the reaction 2-deoxy-D-ribose 5-phosphate = D-glyceraldehyde 3-phosphate + acetaldehyde. It functions in the pathway carbohydrate degradation; 2-deoxy-D-ribose 1-phosphate degradation; D-glyceraldehyde 3-phosphate and acetaldehyde from 2-deoxy-alpha-D-ribose 1-phosphate: step 2/2. Catalyzes a reversible aldol reaction between acetaldehyde and D-glyceraldehyde 3-phosphate to generate 2-deoxy-D-ribose 5-phosphate. In Mycoplasma mobile (strain ATCC 43663 / 163K / NCTC 11711) (Mesomycoplasma mobile), this protein is Deoxyribose-phosphate aldolase.